A 562-amino-acid polypeptide reads, in one-letter code: Phosphoglucomutase-1 (562 aa).

At M1 the chain carries N-acetylmethionine. The residue at position 16 (K16) is an N6-acetyllysine. R23 contributes to the alpha-D-glucose 1,6-bisphosphate binding site. Phosphothreonine is present on T115. S117 serves as a coordination point for alpha-D-glucose 1,6-bisphosphate. S117 acts as the Phosphoserine intermediate in catalysis. Position 117 (S117) interacts with Mg(2+). Residues S117 and S134 each carry the phosphoserine modification. The residue at position 185 (T185) is a Phosphothreonine. Phosphoserine is present on residues S206 and S213. 3 residues coordinate Mg(2+): D288, D290, and D292. Residues D292 and R293 each contribute to the alpha-D-glucose 1,6-bisphosphate site. Position 349 is an N6-acetyllysine (K349). The residue at position 353 (Y353) is a Phosphotyrosine. T357 is a binding site for alpha-D-glucose 1,6-bisphosphate. S369 bears the Phosphoserine mark. Alpha-D-glucose 1,6-bisphosphate contacts are provided by E376, S378, and K389. Phosphoserine is present on S378. Position 419 is an N6-succinyllysine (K419). Residue T467 is modified to Phosphothreonine; by PAK1. Phosphoserine occurs at positions 477, 485, and 505. The residue at position 507 (T507) is a Phosphothreonine. S509 and S541 each carry phosphoserine.

Belongs to the phosphohexose mutase family. In terms of assembly, monomer. Mg(2+) is required as a cofactor. Post-translationally, phosphorylation at Thr-467 by PAK1 significantly enhances enzymatic activity.

The protein localises to the cytoplasm. The enzyme catalyses alpha-D-glucose 1-phosphate = alpha-D-glucose 6-phosphate. The catalysed reaction is O-phospho-L-seryl-[protein] + alpha-D-glucose 1-phosphate = alpha-D-glucose 1,6-bisphosphate + L-seryl-[protein]. It catalyses the reaction alpha-D-glucose 1,6-bisphosphate + L-seryl-[protein] = O-phospho-L-seryl-[protein] + alpha-D-glucose 6-phosphate. Catalyzes the reversible isomerization of alpha-D-glucose 1-phosphate to alpha-D-glucose 6-phosphate. The mechanism proceeds via the intermediate compound alpha-D-glucose 1,6-bisphosphate. This enzyme participates in both the breakdown and synthesis of glucose. This chain is Phosphoglucomutase-1 (PGM1), found in Macaca fascicularis (Crab-eating macaque).